The sequence spans 247 residues: ATP synthase subunit a, chloroplastic (247 aa).

The next 5 helical transmembrane spans lie at 38 to 58, 95 to 115, 134 to 154, 199 to 219, and 220 to 240; these read QVLI…IIAV, VPFI…GALL, INTT…AGLS, LVVV…VMFL, and GLFT…AYIG.

Belongs to the ATPase A chain family. F-type ATPases have 2 components, CF(1) - the catalytic core - and CF(0) - the membrane proton channel. CF(1) has five subunits: alpha(3), beta(3), gamma(1), delta(1), epsilon(1). CF(0) has four main subunits: a, b, b' and c.

The protein localises to the plastid. The protein resides in the chloroplast thylakoid membrane. Its function is as follows. Key component of the proton channel; it plays a direct role in the translocation of protons across the membrane. The protein is ATP synthase subunit a, chloroplastic of Oryza nivara (Indian wild rice).